Reading from the N-terminus, the 234-residue chain is 2,3,4,5-tetrahydropyridine-2,6-dicarboxylate N-acetyltransferase (234 aa).

It belongs to the transferase hexapeptide repeat family. DapH subfamily.

It carries out the reaction (S)-2,3,4,5-tetrahydrodipicolinate + acetyl-CoA + H2O = L-2-acetamido-6-oxoheptanedioate + CoA. It functions in the pathway amino-acid biosynthesis; L-lysine biosynthesis via DAP pathway; LL-2,6-diaminopimelate from (S)-tetrahydrodipicolinate (acetylase route): step 1/3. Its function is as follows. Catalyzes the transfer of an acetyl group from acetyl-CoA to tetrahydrodipicolinate. This chain is 2,3,4,5-tetrahydropyridine-2,6-dicarboxylate N-acetyltransferase, found in Lacticaseibacillus casei (strain BL23) (Lactobacillus casei).